The primary structure comprises 361 residues: sn-glycerol-3-phosphate import ATP-binding protein UgpC (361 aa).

Residues 4–235 form the ABC transporter domain; that stretch reads VTLRNVRKTY…PATTFVASFI (232 aa). 37–44 is a binding site for ATP; that stretch reads GPSGCGKS.

Belongs to the ABC transporter superfamily. sn-glycerol-3-phosphate importer (TC 3.A.1.1.3) family. In terms of assembly, the complex is composed of two ATP-binding proteins (UgpC), two transmembrane proteins (UgpA and UgpE) and a solute-binding protein (UgpB).

Its subcellular location is the cell inner membrane. The catalysed reaction is sn-glycerol 3-phosphate(out) + ATP + H2O = sn-glycerol 3-phosphate(in) + ADP + phosphate + H(+). In terms of biological role, part of the ABC transporter complex UgpBAEC involved in sn-glycerol-3-phosphate (G3P) import. Responsible for energy coupling to the transport system. The protein is sn-glycerol-3-phosphate import ATP-binding protein UgpC of Rhodopseudomonas palustris (strain BisA53).